Consider the following 630-residue polypeptide: Internalin B (630 aa).

A signal peptide spans 1 to 30 (MKEKHNPRRKYCLISGLAIIFSLWIIIGNG). An LRRNT domain is found at 31 to 76 (AKVQAETITVSTPIKQIFPDDAFAETIKDNLKKKSVTDAVTQNELN). 4 residues coordinate Ca(2+): proline 49, aspartate 51, glutamate 55, and aspartate 59. LRR repeat units follow at residues 75–97 (LNSI…IQYL), 98–121 (PNVT…NLKN), 123–141 (GWLF…LKDL), 142–163 (KKLK…LVHL), 164–187 (PQLE…RLTK), 189–207 (DTLS…LAGL), and 208–231 (TKLQ…GLKN). Residues 241–319 (ECLNKPINHQ…RFHGRVTQPL (79 aa)) are ig-like region. The region spanning 241 to 330 (ECLNKPINHQ…EVYTVSYDVD (90 aa)) is the LRRCT domain. Positions 320-392 (KEVYTVSYDV…TLYAVFKAET (73 aa)) are b repeat region. 3 consecutive GW domains span residues 393 to 467 (TEKT…LDRY), 472 to 550 (YDKG…TFYK), and 553 to 630 (MEKP…RAQK). The interval 399–630 (LTRYVKYIRG…TKAANLRAQK (232 aa)) is GW repeat region, necessary and sufficient for cell surface attachment, interacts with host C1QBP and with heparin.

The protein belongs to the internalin family. Monomer. Interacts via its LRR repeats with the extracellular portion of mammalian host MET; MET can bind HGF, its endogenous ligand, and InlB simultaneously. Probably forms a dimer upon interaction with host MET, which subsequently allows dimerization of the host MET and subsequent host signaling; dimerization probably occurs via the convex surface of InlB. Interacts with host complement component 1 Q subcomponent-binding protein (C1QBP). Interacts in vitro with human intestinal mucin-2 (MUC2) but not with mucin-1. The cofactor is Ca(2+).

It localises to the secreted. The protein resides in the cell surface. Its subcellular location is the cell membrane. Its function is as follows. Mediates the entry of L.monocytogenes into normally non-phagocytic mammalian host cells. Its host receptor is hepatocyte growth factor receptor (HGF receptor, a tyrosine kinase, MET) which is tyrosine-phosphorylated in response to InlB in human, green monkey, mouse and dog cell lines. Downstream adapter proteins GAB1 and CBL are phosphorylated in response to InlB, which also causes cell colony scattering. InlB binding to mammalian cells is saturable and inhibited by EDTA; InlB-coated beads can be taken up by host cells. Complement component 1 Q subcomponent-binding protein (gC1q-R, C1QBP) might act as an InlB receptor, leading to activation of PI3-kinase in green monkey cells. Stimulation of Tyr-phosphorylation by InlB is antagonized by C1QBP, showing that potentiation of MET signaling via the GW domains is not mediated by C1QBP; the exact role of C1QBP remains to be determined. Stimulation of Tyr-phosphorylation of MET by InlB is potentiated by the InlB GW domains and glycosaminoglycans such as heparin; exogenously added InlB, or hepatocyte growth factor (HGF) will also substitute for bacterial InlB, suggesting InlB promotes bacterial invasion by mimicking the hormone HGF. May stimulate phosphatidylinositol 4,5-bisphosphate 3-kinase (PI3-kinase) in green monkey cells, has less effect in humans as PI3-kinase is constitutively and highly expressed in Caco cells. Binds heparin; C1QBP and heparin seem to bind to the GW domains. In Listeria monocytogenes serotype 1/2a (strain EGD / Mackaness), this protein is Internalin B (inlB).